The following is a 440-amino-acid chain: Chromosome partition protein MukF (440 aa).

Residues 208 to 236 form a leucine-zipper region; the sequence is LSETSGTLRELQDTLEAAGDKLQANLLRI.

The protein belongs to the MukF family. In terms of assembly, interacts, and probably forms a ternary complex, with MukE and MukB via its C-terminal region. The complex formation is stimulated by calcium or magnesium. It is required for an interaction between MukE and MukB.

It is found in the cytoplasm. It localises to the nucleoid. Involved in chromosome condensation, segregation and cell cycle progression. May participate in facilitating chromosome segregation by condensation DNA from both sides of a centrally located replisome during cell division. Not required for mini-F plasmid partitioning. Probably acts via its interaction with MukB and MukE. Overexpression results in anucleate cells. It has a calcium binding activity. This Citrobacter koseri (strain ATCC BAA-895 / CDC 4225-83 / SGSC4696) protein is Chromosome partition protein MukF.